The sequence spans 525 residues: MTKNIHKHRILILDFGSQYTQLVARRVREIGVYCELWAWDVSEEQIREFNPSGIILSGGPESTTEANSPRAPEYVFTAGVPVLGVCYGMQTMAMQLGGQVEGSNEREFGYAQVEITTESALVRDIEDALSPAGKPLLDVWMSHGDKVTAIPADFVTVASTDTCPFAIMANEEKRFYGVQFHPEVTHTRQGQRMLERFVLDICQCEALWTPATIIEDAVERIRQQVGEDHVILGLSGGVDSSVTAMLLHRAIGKRLTCVFVDNGLLRLNEAEQVLEMFGDHFGLNIVHVAAEDRFLSALAGVDEPEAKRKIIGRVFVELFDEEACKQSEVKWLAQGTIYPDVIESAASATGKAHVIKSHHNVGGLPKEMKLGLVEPLKELFKDEVRKIGLELGLPYDMLFRHPFPGPGLGVRVLGEVKKEYCDLLRRADAIFIEELHKADLYNKVSQAFTVFLPVRSVGVMGDGRKYDWVVSLRAVETIDFMTAHWAHLPYDFLGRVSNRIINEVNGISRVVYDISGKPPATIEWE.

The Glutamine amidotransferase type-1 domain occupies 9-207 (RILILDFGSQ…VLDICQCEAL (199 aa)). The Nucleophile role is filled by C86. Active-site residues include H181 and E183. Residues 208-400 (WTPATIIEDA…LGLPYDMLFR (193 aa)) form the GMPS ATP-PPase domain. Residue 235-241 (SGGVDSS) participates in ATP binding.

Homodimer.

It carries out the reaction XMP + L-glutamine + ATP + H2O = GMP + L-glutamate + AMP + diphosphate + 2 H(+). It functions in the pathway purine metabolism; GMP biosynthesis; GMP from XMP (L-Gln route): step 1/1. Catalyzes the synthesis of GMP from XMP. The protein is GMP synthase [glutamine-hydrolyzing] of Serratia proteamaculans (strain 568).